The chain runs to 389 residues: Stilbene synthase 1 (389 aa).

Residue 55 to 58 coordinates substrate; it reads KFQR. Cysteine 164 is a catalytic residue. Residues leucine 267 and 305–307 contribute to the substrate site; that span reads GGR.

Belongs to the thiolase-like superfamily. Chalcone/stilbene synthases family. In terms of assembly, homodimer.

The protein resides in the cytoplasm. The enzyme catalyses 4-coumaroyl-CoA + 3 malonyl-CoA + 3 H(+) = trans-resveratrol + 4 CO2 + 4 CoA. It functions in the pathway phytoalexin biosynthesis; 3,4',5-trihydroxystilbene biosynthesis; 3,4',5-trihydroxystilbene from trans-4-coumarate: step 2/2. The polypeptide is Stilbene synthase 1 (Arachis hypogaea (Peanut)).